A 189-amino-acid polypeptide reads, in one-letter code: Probable nicotinate-nucleotide adenylyltransferase (189 aa).

The protein belongs to the NadD family.

It catalyses the reaction nicotinate beta-D-ribonucleotide + ATP + H(+) = deamido-NAD(+) + diphosphate. Its pathway is cofactor biosynthesis; NAD(+) biosynthesis; deamido-NAD(+) from nicotinate D-ribonucleotide: step 1/1. In terms of biological role, catalyzes the reversible adenylation of nicotinate mononucleotide (NaMN) to nicotinic acid adenine dinucleotide (NaAD). The sequence is that of Probable nicotinate-nucleotide adenylyltransferase from Exiguobacterium sibiricum (strain DSM 17290 / CCUG 55495 / CIP 109462 / JCM 13490 / 255-15).